The sequence spans 360 residues: UDP-N-acetylglucosamine--N-acetylmuramyl-(pentapeptide) pyrophosphoryl-undecaprenol N-acetylglucosamine transferase (360 aa).

Residues 14–16 (TGG), Asn131, Arg167, Ser195, Ile249, and Gln294 contribute to the UDP-N-acetyl-alpha-D-glucosamine site.

The protein belongs to the glycosyltransferase 28 family. MurG subfamily.

The protein resides in the cell inner membrane. The enzyme catalyses di-trans,octa-cis-undecaprenyl diphospho-N-acetyl-alpha-D-muramoyl-L-alanyl-D-glutamyl-meso-2,6-diaminopimeloyl-D-alanyl-D-alanine + UDP-N-acetyl-alpha-D-glucosamine = di-trans,octa-cis-undecaprenyl diphospho-[N-acetyl-alpha-D-glucosaminyl-(1-&gt;4)]-N-acetyl-alpha-D-muramoyl-L-alanyl-D-glutamyl-meso-2,6-diaminopimeloyl-D-alanyl-D-alanine + UDP + H(+). It participates in cell wall biogenesis; peptidoglycan biosynthesis. Functionally, cell wall formation. Catalyzes the transfer of a GlcNAc subunit on undecaprenyl-pyrophosphoryl-MurNAc-pentapeptide (lipid intermediate I) to form undecaprenyl-pyrophosphoryl-MurNAc-(pentapeptide)GlcNAc (lipid intermediate II). The sequence is that of UDP-N-acetylglucosamine--N-acetylmuramyl-(pentapeptide) pyrophosphoryl-undecaprenol N-acetylglucosamine transferase from Polaromonas naphthalenivorans (strain CJ2).